The primary structure comprises 660 residues: tRNA 5-methylaminomethyl-2-thiouridine biosynthesis bifunctional protein MnmC (660 aa).

Residues 1 to 242 form a tRNA (mnm(5)s(2)U34)-methyltransferase region; sequence MTDRIVPATL…KRAMLVGEFA (242 aa). The tract at residues 266–660 is FAD-dependent cmnm(5)s(2)U34 oxidoreductase; sequence IGAGLAGCAV…VRALRHGRVA (395 aa).

It in the N-terminal section; belongs to the methyltransferase superfamily. tRNA (mnm(5)s(2)U34)-methyltransferase family. This sequence in the C-terminal section; belongs to the DAO family. The cofactor is FAD.

Its subcellular location is the cytoplasm. The catalysed reaction is 5-aminomethyl-2-thiouridine(34) in tRNA + S-adenosyl-L-methionine = 5-methylaminomethyl-2-thiouridine(34) in tRNA + S-adenosyl-L-homocysteine + H(+). Catalyzes the last two steps in the biosynthesis of 5-methylaminomethyl-2-thiouridine (mnm(5)s(2)U) at the wobble position (U34) in tRNA. Catalyzes the FAD-dependent demodification of cmnm(5)s(2)U34 to nm(5)s(2)U34, followed by the transfer of a methyl group from S-adenosyl-L-methionine to nm(5)s(2)U34, to form mnm(5)s(2)U34. The protein is tRNA 5-methylaminomethyl-2-thiouridine biosynthesis bifunctional protein MnmC of Burkholderia pseudomallei (strain K96243).